The primary structure comprises 66 residues: Neurotoxin Cex11 (66 aa).

The LCN-type CS-alpha/beta domain occupies K1–G64. 4 disulfides stabilise this stretch: C12-C63, C16-C39, C25-C44, and C29-C46. Position 63 is a cysteine amide (C63). Positions G64–K66 are excised as a propeptide.

It belongs to the long (4 C-C) scorpion toxin superfamily. Sodium channel inhibitor family. Beta subfamily. As to expression, expressed by the venom gland.

The protein localises to the secreted. In terms of biological role, beta toxins bind voltage-independently at site-4 of sodium channels (Nav) and shift the voltage of activation toward more negative potentials thereby affecting sodium channel activation and promoting spontaneous and repetitive firing. This chain is Neurotoxin Cex11, found in Centruroides exilicauda (Bark scorpion).